The sequence spans 23 residues: SENTGAIGKVFPRGNHWAVGHLM.

A Methionine amide modification is found at Met23.

This sequence belongs to the bombesin/neuromedin-B/ranatensin family.

It localises to the secreted. The protein localises to the cytoplasmic vesicle. The protein resides in the secretory vesicle lumen. Functionally, stimulates the release of gastrin and other gastrointestinal hormones. The polypeptide is Gastrin-releasing peptide (grp) (Oncorhynchus mykiss (Rainbow trout)).